Consider the following 365-residue polypeptide: tRNA N6-adenosine threonylcarbamoyltransferase (365 aa).

Fe cation-binding residues include His-119 and His-123. Residues 141–145, Asp-174, Gly-187, and Asn-289 each bind substrate; that span reads LVSGG. Asp-317 is a binding site for Fe cation. The tract at residues 342–365 is disordered; the sequence is ARPRWPLDSKSPAMLGSGKKGAKA.

This sequence belongs to the KAE1 / TsaD family. The cofactor is Fe(2+).

Its subcellular location is the cytoplasm. The catalysed reaction is L-threonylcarbamoyladenylate + adenosine(37) in tRNA = N(6)-L-threonylcarbamoyladenosine(37) in tRNA + AMP + H(+). Its function is as follows. Required for the formation of a threonylcarbamoyl group on adenosine at position 37 (t(6)A37) in tRNAs that read codons beginning with adenine. Is involved in the transfer of the threonylcarbamoyl moiety of threonylcarbamoyl-AMP (TC-AMP) to the N6 group of A37, together with TsaE and TsaB. TsaD likely plays a direct catalytic role in this reaction. The polypeptide is tRNA N6-adenosine threonylcarbamoyltransferase (Roseobacter denitrificans (strain ATCC 33942 / OCh 114) (Erythrobacter sp. (strain OCh 114))).